The sequence spans 320 residues: tRNA U34 carboxymethyltransferase (320 aa).

Residues lysine 89, tryptophan 103, lysine 108, glycine 127, 177–178, methionine 193, tyrosine 197, and arginine 312 contribute to the carboxy-S-adenosyl-L-methionine site; that span reads LE.

The protein belongs to the class I-like SAM-binding methyltransferase superfamily. CmoB family. Homotetramer.

The catalysed reaction is carboxy-S-adenosyl-L-methionine + 5-hydroxyuridine(34) in tRNA = 5-carboxymethoxyuridine(34) in tRNA + S-adenosyl-L-homocysteine + H(+). Catalyzes carboxymethyl transfer from carboxy-S-adenosyl-L-methionine (Cx-SAM) to 5-hydroxyuridine (ho5U) to form 5-carboxymethoxyuridine (cmo5U) at position 34 in tRNAs. This chain is tRNA U34 carboxymethyltransferase, found in Stutzerimonas stutzeri (strain A1501) (Pseudomonas stutzeri).